The following is a 511-amino-acid chain: N-acetylgalactosamine-6-O-sulfatase (511 aa).

Serine 83 is modified (3-oxoalanine (Ser)).

This sequence belongs to the sulfatase family. In terms of processing, the conversion to 3-oxoalanine (also known as C-formylglycine, FGly), of a serine or cysteine residue in prokaryotes and of a cysteine residue in eukaryotes, is critical for catalytic activity.

Its function is as follows. Exosulfatase involved in the degradation of the glycosaminoglycans (GAGs) chondroitin sulfate (CS) and dermatan sulfate (DS). Catalyzes the hydrolysis of the 6-sulfate groups of the N-acetyl-D-galactosamine 6-sulfate units. GAG-specific sulfatases play a key role in the persistence of the major human gut symbiont B.thetaiotaomicron in the host gastrointestinal tract. This is N-acetylgalactosamine-6-O-sulfatase from Bacteroides thetaiotaomicron (strain ATCC 29148 / DSM 2079 / JCM 5827 / CCUG 10774 / NCTC 10582 / VPI-5482 / E50).